The chain runs to 251 residues: Putative F-box protein L166 (251 aa).

The region spanning 1 to 46 (MDNICELFDEILPLIIEYLSDHDKVKFMTTCSRLYYFIDKVYYENI) is the F-box domain. The disordered stretch occupies residues 188 to 251 (PEPESQENFR…RPKSFMKYRR (64 aa)). Polar residues predominate over residues 202–217 (TESNNNKPVNKSQPQI). Residues 241 to 251 (KRPKSFMKYRR) are compositionally biased toward basic residues.

The protein is Putative F-box protein L166 of Acanthamoeba polyphaga (Amoeba).